Reading from the N-terminus, the 103-residue chain is Small ubiquitin-related modifier 2 (103 aa).

The Ubiquitin-like domain maps to 15–92 (AHINLKVKGQ…IDAMLHQTGG (78 aa)). Gly92 is covalently cross-linked (Glycyl lysine isopeptide (Gly-Lys) (interchain with K-? in acceptor proteins)).

The protein belongs to the ubiquitin family. SUMO subfamily. In terms of assembly, interacts with SAE2, SCE1, SIZ1 and MMS21. Interacts with HSFA2. Covalently attached to ABI5, FLD, GTE3, HSFA2 and ICE1.

Its subcellular location is the nucleus. The protein resides in the cytoplasm. Its function is as follows. Ubiquitin-like protein which can be covalently attached to target lysines as a monomer. Does not seem to be involved in protein degradation and may function as an antagonist of ubiquitin in the degradation process. Required for the massive protein sumoylation in the nucleus induced by heat shock and controlled by SIZ1. The chain is Small ubiquitin-related modifier 2 from Arabidopsis thaliana (Mouse-ear cress).